A 400-amino-acid chain; its full sequence is Probable glucan endo-1,6-beta-glucosidase B (400 aa).

Positions 1–17 are cleaved as a signal peptide; sequence MIRRLAALSALSGLATA. N-linked (GlcNAc...) asparagine glycosylation occurs at Asn30. Glu219 serves as the catalytic Proton donor. N-linked (GlcNAc...) asparagine glycosylation occurs at Asn272. Glu320 (nucleophile) is an active-site residue.

Belongs to the glycosyl hydrolase 5 (cellulase A) family.

The protein resides in the secreted. It carries out the reaction Random hydrolysis of (1-&gt;6)-linkages in (1-&gt;6)-beta-D-glucans.. In terms of biological role, beta-glucanases participate in the metabolism of beta-glucan, the main structural component of the cell wall. Acts on lutean, pustulan and 1,6-oligo-beta-D-glucosides. This is Probable glucan endo-1,6-beta-glucosidase B (exgB) from Neosartorya fischeri (strain ATCC 1020 / DSM 3700 / CBS 544.65 / FGSC A1164 / JCM 1740 / NRRL 181 / WB 181) (Aspergillus fischerianus).